The primary structure comprises 103 residues: Protamine-2 (103 aa).

The interval 1–103 is disordered; the sequence is MVRYRMRSLS…RTRRRRCRRH (103 aa). A phosphoserine mark is found at Ser8 and Ser10. Positions 8-17 are enriched in basic and acidic residues; the sequence is SLSERPHEVH. Low complexity predominate over residues 18–29; sequence GQQVHGQDQGHN. Positions 48 to 103 are enriched in basic residues; the sequence is HRGHSHHRRRRCSRRRLHRIHRRRHRSCRRRRRRSCRHRRRHRRGCRTRRRRCRRH.

It belongs to the protamine P2 family. Interacts with TDRP. Post-translationally, proteolytic processing into mature chains is required for histone eviction during spermatogenesis. Transition proteins (TNP1 and TNP2) are required for processing. In terms of tissue distribution, testis.

It is found in the nucleus. It localises to the chromosome. Protamines substitute for histones in the chromatin of sperm during the haploid phase of spermatogenesis. They compact sperm DNA into a highly condensed, stable and inactive complex. The chain is Protamine-2 (PRM2) from Macaca nemestrina (Pig-tailed macaque).